Here is a 176-residue protein sequence, read N- to C-terminus: MILANDELKKLISTGRLKVDPLAPDTVRENGLDLRIGGEYAIYAYEGAVVKPCELENARHLFRIVKADEVVIPPRNFVLLTTEEYVKMPDDVVGLANLRSTLARYGLVIPPTVVDAGFEGNITIEVVNESPNTIVLKRGMRFLHLILVKAEGRALYSGTYQGQRGVTPPKGLRGEC.

DCTP-binding positions include arginine 99–arginine 104 and aspartate 115. Glutamate 125 (proton donor/acceptor) is an active-site residue. Glutamine 163 provides a ligand contact to dCTP.

The protein belongs to the dCTP deaminase family. Homotrimer.

The catalysed reaction is dCTP + H2O + H(+) = dUTP + NH4(+). Its pathway is pyrimidine metabolism; dUMP biosynthesis; dUMP from dCTP (dUTP route): step 1/2. In terms of biological role, catalyzes the deamination of dCTP to dUTP. The protein is dCTP deaminase of Pyrobaculum islandicum (strain DSM 4184 / JCM 9189 / GEO3).